Here is a 267-residue protein sequence, read N- to C-terminus: NADP-dependent mannitol dehydrogenase (267 aa).

Positions 108 and 141 each coordinate NADP(+). The Proton donor role is filled by Ser160. NADP(+) contacts are provided by Tyr175, Lys179, Ile207, and Thr209. Tyr175 (proton acceptor) is an active-site residue. Lys179 acts as the Lowers pKa of active site Tyr in catalysis.

It belongs to the short-chain dehydrogenases/reductases (SDR) family. As to quaternary structure, exists as monomer, dimer and tetramer.

It catalyses the reaction D-mannitol + NADP(+) = D-fructose + NADPH + H(+). Functionally, interconverts D-mannitol and D-fructose. Not active with fructose 6-phosphate or NADH. This chain is NADP-dependent mannitol dehydrogenase, found in Davidiella tassiana (Mycosphaerella tassiana).